A 634-amino-acid polypeptide reads, in one-letter code: Threonine--tRNA ligase (634 aa).

Residues 1–61 (MINITLPDGS…DHDASLRIIT (61 aa)) form the TGS domain. A catalytic region spans residues 243–534 (DHRRIGKAQD…LIEHHAGAFP (292 aa)). C334, H385, and H511 together coordinate Zn(2+).

Belongs to the class-II aminoacyl-tRNA synthetase family. Homodimer. It depends on Zn(2+) as a cofactor.

The protein resides in the cytoplasm. It catalyses the reaction tRNA(Thr) + L-threonine + ATP = L-threonyl-tRNA(Thr) + AMP + diphosphate + H(+). Its function is as follows. Catalyzes the attachment of threonine to tRNA(Thr) in a two-step reaction: L-threonine is first activated by ATP to form Thr-AMP and then transferred to the acceptor end of tRNA(Thr). Also edits incorrectly charged L-seryl-tRNA(Thr). The polypeptide is Threonine--tRNA ligase (Xanthomonas euvesicatoria pv. vesicatoria (strain 85-10) (Xanthomonas campestris pv. vesicatoria)).